A 92-amino-acid chain; its full sequence is Long neurotoxin 1 (92 aa).

The signal sequence occupies residues 1–21 (MKTLLLTLVVVTIVCLDLGYT). Cystine bridges form between Cys-24–Cys-42, Cys-35–Cys-63, Cys-67–Cys-79, and Cys-80–Cys-85.

The protein belongs to the three-finger toxin family. Long-chain subfamily. Type II alpha-neurotoxin sub-subfamily. In terms of tissue distribution, expressed by the venom gland.

Its subcellular location is the secreted. In terms of biological role, binds with high affinity to muscular (alpha-1/CHRNA1) and neuronal (alpha-7/CHRNA7) nicotinic acetylcholine receptor (nAChR) and inhibits acetylcholine from binding to the receptor, thereby impairing neuromuscular and neuronal transmission. The chain is Long neurotoxin 1 from Oxyuranus scutellatus scutellatus (Australian taipan).